The following is a 369-amino-acid chain: Glycolate oxidase (369 aa).

M1 bears the N-acetylmethionine mark. Residues 1–359 (MEITNVNEYE…SRSHIAADWD (359 aa)) enclose the FMN hydroxy acid dehydrogenase domain. Y24 is a glyoxylate binding site. Residues 77–79 (PTA), S106, 127–129 (QLY), and T155 contribute to the FMN site. Residue Y129 participates in glyoxylate binding. R164 contributes to the glyoxylate binding site. Positions 230 and 252 each coordinate FMN. The glyoxylate site is built by H254 and R257. The Proton acceptor role is filled by H254. FMN is bound by residues 285–289 (DGGVR) and 308–309 (GR). Positions 367–369 (ARL) match the Microbody targeting signal motif.

Belongs to the FMN-dependent alpha-hydroxy acid dehydrogenase family. As to quaternary structure, homotetramer. It depends on FMN as a cofactor.

It localises to the peroxisome. The catalysed reaction is glycolate + O2 = glyoxylate + H2O2. It carries out the reaction a (2S)-2-hydroxycarboxylate + O2 = a 2-oxocarboxylate + H2O2. The protein operates within photosynthesis; photorespiration; glycine from 2-phosphoglycolate: step 2/3. Catalyzes the oxidation of glycolate to glyoxylate, with a reduction of O2 to H2O2. Is a key enzyme in photorespiration in green plants. To a lesser extent, is also able to use L-lactate and 2-hydroxbyutanoate as substrate in vitro, but shows almost no activity with L-mandelate. The polypeptide is Glycolate oxidase (Spinacia oleracea (Spinach)).